The primary structure comprises 92 residues: Small ribosomal subunit protein uS19c (92 aa).

Belongs to the universal ribosomal protein uS19 family.

Its subcellular location is the plastid. It is found in the chloroplast. Protein S19 forms a complex with S13 that binds strongly to the 16S ribosomal RNA. The protein is Small ribosomal subunit protein uS19c of Dioscorea elephantipes (Elephant's foot yam).